We begin with the raw amino-acid sequence, 439 residues long: Divalent metal cation transporter MntH (439 aa).

Transmembrane regions (helical) follow at residues 32 to 52 (GASM…AYMD), 67 to 87 (GYAL…FQSL), 121 to 141 (IAAM…LSLL), 144 to 164 (MPLL…LLLE), 173 to 193 (LAIG…LFIT), 214 to 234 (ALLI…LFLH), 261 to 281 (VVVA…MAAG), 301 to 321 (APLL…ASGI), 350 to 370 (AVTM…TQAL), 371 to 391 (VLSQ…LLWF), and 406 to 426 (FIAV…AVLI).

This sequence belongs to the NRAMP family.

The protein resides in the cell inner membrane. In terms of biological role, h(+)-stimulated, divalent metal cation uptake system. This chain is Divalent metal cation transporter MntH, found in Verminephrobacter eiseniae (strain EF01-2).